Consider the following 260-residue polypeptide: Vaa serine proteinase homolog 1 (260 aa).

A signal peptide spans 1 to 18 (MVLIRVLANLLVLQLSYA). Residues 19–24 (QKSSEL) constitute a propeptide that is removed on maturation. Residues 25 to 251 (VIGGDECNIN…YTDWIQSIIA (227 aa)) enclose the Peptidase S1 domain. 6 cysteine pairs are disulfide-bonded: C31–C165, C52–C68, C100–C258, C144–C212, C176–C191, and C202–C227. Residue N123 is glycosylated (N-linked (GlcNAc...) asparagine). The segment at 172 to 186 (DYSVCQKVYRKLPEK) is key residues for binding to FVIIIa. N-linked (GlcNAc...) asparagine glycosylation occurs at N253.

It belongs to the peptidase S1 family. Snake venom subfamily. Post-translationally, N-glycosylated. The toxin exists in multiple glycoforms. In terms of tissue distribution, expressed by the venom gland.

It localises to the secreted. This is the first member of the serine protease family that has strong anticoagulant activity and lacks enzymatic activity. It inhibits activities of three blood coagulation complexes: (1) prothrombinase complex (composed of blood coagulation factors Va and Xa (F5 and F10)) (IC(50)=164.1 nM), (2) intrinsic tenase complex (composed of factors VIIIa and IXa (F8 and F9)), and (3) extrinsic tenase complex (composed of tissue factor and factor VIIa (F7)). The toxin also has been observed to bind prothrombin, factor FVa, non-activated and activated forms of factors FVII (F7) (FVII and FVIIa), factor FVIIIa (F8), factors FIX and FIXa (F9) and factors FX and FXa (F10). The toxin inhibits the activity of the intrinsic tenase complex mainly by competing with FIXa (F9) for binding to FVIIIa (F8). The protein is Vaa serine proteinase homolog 1 of Vipera ammodytes ammodytes (Western sand viper).